The primary structure comprises 437 residues: Phosphoglucosamine mutase (437 aa).

The active-site Phosphoserine intermediate is the serine 93. Serine 93, aspartate 230, aspartate 232, and aspartate 234 together coordinate Mg(2+). Serine 93 carries the phosphoserine modification.

The protein belongs to the phosphohexose mutase family. Mg(2+) is required as a cofactor. Post-translationally, activated by phosphorylation.

It catalyses the reaction alpha-D-glucosamine 1-phosphate = D-glucosamine 6-phosphate. Its function is as follows. Catalyzes the conversion of glucosamine-6-phosphate to glucosamine-1-phosphate. In Clavibacter michiganensis subsp. michiganensis (strain NCPPB 382), this protein is Phosphoglucosamine mutase.